We begin with the raw amino-acid sequence, 404 residues long: Formate-dependent phosphoribosylglycinamide formyltransferase (404 aa).

Residues 25-26 and glutamate 85 each bind N(1)-(5-phospho-beta-D-ribosyl)glycinamide; that span reads EL. ATP contacts are provided by residues arginine 118, lysine 159, 164-169, 199-202, and glutamate 207; these read SSGKGQ and EGFV. Residues 123 to 318 enclose the ATP-grasp domain; it reads RLAAEELGLP…EFELHARAIL (196 aa). Mg(2+) is bound by residues glutamate 277 and glutamate 289. Residues aspartate 296, lysine 365, and 372-373 each bind N(1)-(5-phospho-beta-D-ribosyl)glycinamide; that span reads RR.

Belongs to the PurK/PurT family. In terms of assembly, homodimer.

It catalyses the reaction N(1)-(5-phospho-beta-D-ribosyl)glycinamide + formate + ATP = N(2)-formyl-N(1)-(5-phospho-beta-D-ribosyl)glycinamide + ADP + phosphate + H(+). The protein operates within purine metabolism; IMP biosynthesis via de novo pathway; N(2)-formyl-N(1)-(5-phospho-D-ribosyl)glycinamide from N(1)-(5-phospho-D-ribosyl)glycinamide (formate route): step 1/1. Involved in the de novo purine biosynthesis. Catalyzes the transfer of formate to 5-phospho-ribosyl-glycinamide (GAR), producing 5-phospho-ribosyl-N-formylglycinamide (FGAR). Formate is provided by PurU via hydrolysis of 10-formyl-tetrahydrofolate. This chain is Formate-dependent phosphoribosylglycinamide formyltransferase, found in Burkholderia thailandensis (strain ATCC 700388 / DSM 13276 / CCUG 48851 / CIP 106301 / E264).